A 248-amino-acid chain; its full sequence is Glutathione S-transferase omega-2 (248 aa).

A GST N-terminal domain is found at 22-101 (GVIRIYSMRF…YLDDVYPGRK (80 aa)). Cysteine 32 (nucleophile) is an active-site residue. Residues lysine 59, isoleucine 72, and 85–86 (ES) each bind glutathione. Positions 106-231 (DPYERARQKM…VFLGFLNLYF (126 aa)) constitute a GST C-terminal domain.

Belongs to the GST superfamily. Omega family.

It catalyses the reaction RX + glutathione = an S-substituted glutathione + a halide anion + H(+). The enzyme catalyses L-dehydroascorbate + 2 glutathione = glutathione disulfide + L-ascorbate. The catalysed reaction is methylarsonate + 2 glutathione + H(+) = methylarsonous acid + glutathione disulfide + H2O. Exhibits glutathione-dependent thiol transferase activity. Has high dehydroascorbate reductase activity and may contribute to the recycling of ascorbic acid. Participates in the biotransformation of inorganic arsenic and reduces monomethylarsonic acid (MMA). The polypeptide is Glutathione S-transferase omega-2 (Gsto2) (Mus musculus (Mouse)).